The sequence spans 129 residues: MKKFNVTVNGTAYDVEVNEVKAAAPAAAPKAAPAAAPAPKAAPAPAPAPAAAAAPVPAGAETVKAPMPGKILSVAVSAGQAVKKGETLLILEAMKMQNEIAAPHDAVVSEVRVSANQTVSTGDDMVVLG.

Composition is skewed to low complexity over residues 24–39 (APAA…APAP) and 49–58 (PAAAAAPVPA). The interval 24–58 (APAAAPKAAPAAAPAPKAAPAPAPAPAAAAAPVPA) is disordered. A Biotinyl-binding domain is found at 51–129 (AAAAPVPAGA…STGDDMVVLG (79 aa)). Lysine 95 carries the post-translational modification N6-biotinyllysine.

The methylmalonyl-CoA decarboxylase is composed of five subunits: the carboxyltransferase alpha subunit (MmdA), the tunnel beta subunit (MmdB), the biotin-containing gamma subunit (MmdC), and the delta (MmdD) and epsilon (MmdE) subunits. The cofactor is biotin.

It localises to the cell membrane. It carries out the reaction (S)-methylmalonyl-CoA + Na(+)(in) + H(+)(out) = propanoyl-CoA + Na(+)(out) + CO2. Completely inhibited by avidin. Its function is as follows. Biotin-containing subunit of the sodium ion pump methylmalonyl-CoA decarboxylase, which converts the chemical energy of a decarboxylation reaction into an electrochemical gradient of Na(+) ions across the cytoplasmic membrane, thereby creating a sodium ion motive force that is used for ATP synthesis. Can also convert malonyl-CoA into acetyl-CoA. The chain is Methylmalonyl-CoA decarboxylase subunit gamma from Veillonella parvula (Staphylococcus parvulus).